Here is a 151-residue protein sequence, read N- to C-terminus: Protein InSETG-4 (151 aa).

Its subcellular location is the cytoplasm. The protein resides in the cytosol. This Homo sapiens (Human) protein is Protein InSETG-4 (InSet4-G).